Here is a 251-residue protein sequence, read N- to C-terminus: Ditrans,polycis-undecaprenyl-diphosphate synthase ((2E,6E)-farnesyl-diphosphate specific) (251 aa).

D19 is a catalytic residue. Position 19 (D19) interacts with Mg(2+). Substrate is bound by residues 20 to 23 (GNNR), W24, H36, and 64 to 66 (SSE). The Proton acceptor role is filled by N67. Substrate contacts are provided by residues W68, R70, R187, and 193-195 (RIS). E206 provides a ligand contact to Mg(2+).

This sequence belongs to the UPP synthase family. In terms of assembly, homodimer. The cofactor is Mg(2+).

The catalysed reaction is 8 isopentenyl diphosphate + (2E,6E)-farnesyl diphosphate = di-trans,octa-cis-undecaprenyl diphosphate + 8 diphosphate. Its function is as follows. Catalyzes the sequential condensation of isopentenyl diphosphate (IPP) with (2E,6E)-farnesyl diphosphate (E,E-FPP) to yield (2Z,6Z,10Z,14Z,18Z,22Z,26Z,30Z,34E,38E)-undecaprenyl diphosphate (di-trans,octa-cis-UPP). UPP is the precursor of glycosyl carrier lipid in the biosynthesis of bacterial cell wall polysaccharide components such as peptidoglycan and lipopolysaccharide. The chain is Ditrans,polycis-undecaprenyl-diphosphate synthase ((2E,6E)-farnesyl-diphosphate specific) from Pseudomonas aeruginosa (strain ATCC 15692 / DSM 22644 / CIP 104116 / JCM 14847 / LMG 12228 / 1C / PRS 101 / PAO1).